The following is a 1240-amino-acid chain: Phospholipid-transporting ATPase 6 (1240 aa).

Residues Met1 to Leu75 are Cytoplasmic-facing. Residues Pro76–Leu97 form a helical membrane-spanning segment. At Ser98–Pro101 the chain is on the extracellular side. A helical membrane pass occupies residues Leu102 to Lys124. The Cytoplasmic segment spans residues Glu125 to Ile306. A helical transmembrane segment spans residues Ile307–Met328. Topologically, residues Thr329 to His360 are extracellular. Residues Leu361–Val378 traverse the membrane as a helical segment. Over Ser379–Ala943 the chain is Cytoplasmic. Asp426 functions as the 4-aspartylphosphate intermediate in the catalytic mechanism. Lys625 is covalently cross-linked (Glycyl lysine isopeptide (Lys-Gly) (interchain with G-Cter in ubiquitin)). Mg(2+)-binding residues include Asp888 and Asp892. A helical transmembrane segment spans residues Gln944–Phe963. Residues Glu964–Asp977 are Extracellular-facing. A helical transmembrane segment spans residues Ser978 to Val997. The Cytoplasmic portion of the chain corresponds to Phe998–Arg1027. The helical transmembrane segment at Ile1028–Phe1050 threads the bilayer. At His1051–Asp1063 the chain is on the extracellular side. The helical transmembrane segment at Met1064–Thr1086 threads the bilayer. Over Met1087–Trp1092 the chain is Cytoplasmic. Residues Ile1093–Gly1113 form a helical membrane-spanning segment. Residues Met1114 to Ile1130 are Extracellular-facing. A helical membrane pass occupies residues Leu1131–His1155. Topologically, residues Ile1156 to Gln1240 are cytoplasmic.

Belongs to the cation transport ATPase (P-type) (TC 3.A.3) family. Type IV subfamily.

It localises to the cell membrane. The protein localises to the endomembrane system. It carries out the reaction ATP + H2O + phospholipidSide 1 = ADP + phosphate + phospholipidSide 2.. Its function is as follows. Involved in transport of phospholipids and in regulation of pollen plasma membrane lipid asymmetry. This is Phospholipid-transporting ATPase 6 from Arabidopsis thaliana (Mouse-ear cress).